The sequence spans 276 residues: Src-like-adapter (276 aa).

Glycine 2 is lipidated: N-myristoyl glycine. The region spanning 22-82 (LDSDFLAVLS…PGICVARVYH (61 aa)) is the SH3 domain. The SH2 domain maps to 84 to 175 (WLFEGLGRDK…GLCCVLTTPC (92 aa)). The interval 212-276 (EGTENPLGVD…FFSSPPYFED (65 aa)) is SLA C-terminal. The residue at position 253 (serine 253) is a Phosphoserine. Residue tyrosine 273 is modified to Phosphotyrosine.

As to quaternary structure, interacts with EPHA2, VAV1, LCP2 and PDGFRB. Homodimer. Homodimerization and interaction with phosphorylated CBL occurs via its C-terminal domain. Interacts with phosphorylated proteins ZAP70, CD3Z, SYK and LAT via its SH2 domain. As to expression, expressed in lung and fetal brain. Weakly expressed in heart, adult brain, placenta, liver, skeletal muscle, kidney and pancreas.

The protein resides in the cytoplasm. Its subcellular location is the endosome. Its function is as follows. Adapter protein, which negatively regulates T-cell receptor (TCR) signaling. Inhibits T-cell antigen-receptor induced activation of nuclear factor of activated T-cells. Involved in the negative regulation of positive selection and mitosis of T-cells. May act by linking signaling proteins such as ZAP70 with CBL, leading to a CBL dependent degradation of signaling proteins. This chain is Src-like-adapter (SLA), found in Homo sapiens (Human).